Here is a 773-residue protein sequence, read N- to C-terminus: Cadherin-5 (773 aa).

Residues Met1–Tyr18 form the signal peptide. A propeptide spanning residues Lys19–Arg40 is cleaved from the precursor. N-linked (GlcNAc...) asparagine glycosylation is found at Asn27, Asn31, and Asn32. 5 consecutive Cadherin domains span residues Lys39–Phe144, Val145–Phe251, Lys252–Phe366, Thr367–Leu474, and Leu474–Phe582. The Extracellular segment spans residues Asp41 to Gln595. Ca(2+) is bound by residues Glu51, Glu52, Asp102, and Glu104. Residue Asn121 is glycosylated (N-linked (GlcNAc...) asparagine). Ca(2+)-binding residues include Asp136, Ile137, Asn138, Asp139, and Asn140. Asn150 carries N-linked (GlcNAc...) asparagine glycosylation. Positions 170, 172, 179, and 224 each coordinate Ca(2+). N-linked (GlcNAc...) asparagine glycans are attached at residues Asn263, Asn437, Asn519, and Asn531. The helical transmembrane segment at Ala596–Leu617 threads the bilayer. The Cytoplasmic segment spans residues Arg618–Tyr773.

N-glycosylated. In terms of processing, O-glycosylated.

The protein localises to the cell junction. Its subcellular location is the adherens junction. It localises to the cell membrane. The protein resides in the cytoplasm. Cadherins are calcium-dependent cell adhesion proteins. They preferentially interact with themselves in a homophilic manner in connecting cells; cadherins may thus contribute to the sorting of heterogeneous cell types. This cadherin may play a important role in endothelial cell biology through control of the cohesion and organization of the intercellular junctions. Plays a role in coupling actin fibers to cell junctions in endothelial cells. Associates with CTNND1/p120-catenin to control CADH5 endocytosis. The chain is Cadherin-5 from Gallus gallus (Chicken).